A 198-amino-acid polypeptide reads, in one-letter code: Rac-like GTP-binding protein ARAC3 (198 aa).

Residues 13–21, 31–38, 60–64, and 118–121 contribute to the GTP site; these read GDGAVGKTC, FPTDYVPT, DTAGQ, and TKLD. Residues 35–43 carry the Effector region motif; the sequence is YVPTVFDNF. Cys-158 carries the S-palmitoyl cysteine lipid modification. Cys-195 carries the cysteine methyl ester modification. Cys-195 carries S-geranylgeranyl cysteine lipidation. Residues 196–198 constitute a propeptide, removed in mature form; that stretch reads SIL.

Belongs to the small GTPase superfamily. Rho family. As to quaternary structure, interacts with Rho GDP-dissociation inhibitor 1 and ICR1. Binds to SPK1 when in the inactive GDP-bound form. Ubiquitous. Preferentially expressed at the tip of root hairs.

It localises to the cytoplasm. The protein localises to the cell membrane. Functionally, inactive GDP-bound Rho GTPases reside in the cytosol, are found in a complex with Rho GDP-dissociation inhibitors (Rho GDIs), and are released from the GDI protein in order to translocate to membranes upon activation. Involved in cell polarity control during the actin-dependent tip growth of root hairs, thus regulating root hair length and root hair initiation. Contributes, in a SPK1-dependent manner, to the prevention of cortical microtubules organization into parallel arrays oriented perpendicular to the axis of cell elongation to limit anisotropic cell growth during petal development. SPK1-dependent activation is required for auxin-mediated inhibition of PIN2 internalization during gravitropic responses. The protein is Rac-like GTP-binding protein ARAC3 of Arabidopsis thaliana (Mouse-ear cress).